Reading from the N-terminus, the 719-residue chain is ATP-dependent RNA helicase SUV3 homolog, mitochondrial (719 aa).

A mitochondrion-targeting transit peptide spans Met1–Cys18. Residues Gln16–Arg42 are disordered. The Helicase ATP-binding domain maps to Glu181–Leu319. Gly194 to Thr201 provides a ligand contact to ATP. The Helicase C-terminal domain maps to Lys343 to Ser499. The segment at Ser662–Ile692 is disordered. Basic and acidic residues predominate over residues Ser671–Asn687. A coiled-coil region spans residues Leu693–Asn717.

The protein belongs to the helicase family. Mg(2+) serves as cofactor. Requires Mn(2+) as cofactor.

The protein localises to the mitochondrion matrix. The protein resides in the nucleus. The enzyme catalyses ATP + H2O = ADP + phosphate + H(+). ATPase and DNA/RNA helicase able to unwind DNA/DNA, DNA/RNA and RNA/RNA duplexes in the 5'-3' direction. The polypeptide is ATP-dependent RNA helicase SUV3 homolog, mitochondrial (Caenorhabditis elegans).